Reading from the N-terminus, the 283-residue chain is Accumulation of dyads protein 2 (283 aa).

The interval 1 to 41 (MSDKEQTSGNTDLENAPAGYYSSHDNDVNGVAEDERPSHDS) is disordered. Residues 1–89 (MSDKEQTSGN…APAPVHKFAN (89 aa)) lie on the Cytoplasmic side of the membrane. The helical transmembrane segment at 90–110 (PAPLGLSAFALTTFVLSMFNA) threads the bilayer. Topologically, residues 111–120 (RAQGITVPNV) are extracellular. The helical transmembrane segment at 121–141 (VVGCAMFYGGLVQLIAGIWEI) threads the bilayer. The Cytoplasmic segment spans residues 142 to 151 (ALENTFGGTA). Residues 152–172 (LCSYGGFWLSFAAIYIPWFGI) traverse the membrane as a helical segment. Residues 173–185 (LEAYEDNESDLNN) lie on the Extracellular side of the membrane. A helical transmembrane segment spans residues 186 to 206 (ALGFYLLGWAIFTFGLTVCTM). The Cytoplasmic portion of the chain corresponds to 207–208 (KS). The chain crosses the membrane as a helical span at residues 209–229 (TVMFFLLFFLLALTFLLLSIG). Over 230–240 (HFANRLGVTRA) the chain is Extracellular. Residues 241 to 261 (GGVLGVVVAFIAWYNAYAGVA) traverse the membrane as a helical segment. The Cytoplasmic segment spans residues 262 to 283 (TKQNSYVLARPFPLPSTERVIF).

The protein belongs to the acetate uptake transporter (AceTr) (TC 2.A.96) family.

It is found in the cell membrane. The protein localises to the vacuole membrane. Its function is as follows. Transporter protein required for ammonia export and acetate uptake and resistance. Necessary for up-regulation and down-regulation of meiotic plaque (MP) component levels in a dependency on external acetate. Has a role in ascus formation. This Saccharomyces cerevisiae (strain ATCC 204508 / S288c) (Baker's yeast) protein is Accumulation of dyads protein 2 (ADY2).